Consider the following 450-residue polypeptide: Methylenetetrahydrofolate--tRNA-(uracil-5-)-methyltransferase TrmFO (450 aa).

An FAD-binding site is contributed by 9–14; that stretch reads GGGMAG.

It belongs to the MnmG family. TrmFO subfamily. FAD is required as a cofactor.

The protein resides in the cytoplasm. The catalysed reaction is uridine(54) in tRNA + (6R)-5,10-methylene-5,6,7,8-tetrahydrofolate + NADH + H(+) = 5-methyluridine(54) in tRNA + (6S)-5,6,7,8-tetrahydrofolate + NAD(+). It carries out the reaction uridine(54) in tRNA + (6R)-5,10-methylene-5,6,7,8-tetrahydrofolate + NADPH + H(+) = 5-methyluridine(54) in tRNA + (6S)-5,6,7,8-tetrahydrofolate + NADP(+). Its function is as follows. Catalyzes the folate-dependent formation of 5-methyl-uridine at position 54 (M-5-U54) in all tRNAs. In Roseobacter denitrificans (strain ATCC 33942 / OCh 114) (Erythrobacter sp. (strain OCh 114)), this protein is Methylenetetrahydrofolate--tRNA-(uracil-5-)-methyltransferase TrmFO.